Consider the following 203-residue polypeptide: Small ribosomal subunit protein uS7A (203 aa).

Belongs to the universal ribosomal protein uS7 family. Component of the small ribosomal subunit (SSU). Mature yeast ribosomes consist of a small (40S) and a large (60S) subunit. The 40S small subunit contains 1 molecule of ribosomal RNA (18S rRNA) and at least 33 different proteins. The large 60S subunit contains 3 rRNA molecules (25S, 5.8S and 5S rRNA) and at least 46 different proteins.

It localises to the cytoplasm. The protein resides in the nucleus. Its subcellular location is the nucleolus. Functionally, component of the ribosome, a large ribonucleoprotein complex responsible for the synthesis of proteins in the cell. The small ribosomal subunit (SSU) binds messenger RNAs (mRNAs) and translates the encoded message by selecting cognate aminoacyl-transfer RNA (tRNA) molecules. The large subunit (LSU) contains the ribosomal catalytic site termed the peptidyl transferase center (PTC), which catalyzes the formation of peptide bonds, thereby polymerizing the amino acids delivered by tRNAs into a polypeptide chain. The nascent polypeptides leave the ribosome through a tunnel in the LSU and interact with protein factors that function in enzymatic processing, targeting, and the membrane insertion of nascent chains at the exit of the ribosomal tunnel. The sequence is that of Small ribosomal subunit protein uS7A (rps5) from Schizosaccharomyces pombe (strain 972 / ATCC 24843) (Fission yeast).